The following is an 853-amino-acid chain: Cytochrome P450 monooxygenase mpaDE (853 aa).

Residues 1-6 (MKSLSL) are Lumenal-facing. Residues 7-29 (TWITAVAVVLYLVQRYVRSYWRL) form a helical membrane-spanning segment. Over 30–853 (KDIPGPVLAK…DIENSIEGQK (824 aa)) the chain is Cytoplasmic. Residue Cys-449 participates in heme binding.

It belongs to the cytochrome P450 family. Heme is required as a cofactor.

It is found in the endoplasmic reticulum membrane. The enzyme catalyses 5-methylorsellinate + reduced [NADPH--hemoprotein reductase] + O2 = 4,6-dihydroxy-2-(hydroxymethyl)-3-methylbenzoate + oxidized [NADPH--hemoprotein reductase] + H2O + H(+). The catalysed reaction is 4,6-dihydroxy-2-(hydroxymethyl)-3-methylbenzoate + H(+) = 5,7-dihydroxy-4-methylphthalide + H2O. It functions in the pathway secondary metabolite biosynthesis; terpenoid biosynthesis. Its function is as follows. Cytochrome P450 monooxygenase; part of the gene cluster that mediates the biosynthesis of mycophenolic acid (MPA), the first isolated antibiotic natural product in the world obtained from a culture of Penicillium brevicompactum in 1893. MpaDE is an endoplasmic reticulum-bound enzyme that catalyzes the conversion of 5-methylorsellinic acid (5MOA) into the phthalide compound 5,7-dihydroxy-4,6-dimethylphthalide (DHMP). MpaDE first catalyzes hydroxylation of 5-MOA to 4,6-dihydroxy-2-(hydroxymethyl)-3-methylbenzoic acid (DHMB), and then acts as a lactone synthase that catalyzes the ring closure to convert DHMB into DHMP. The first step of the pathway is the synthesis of 5-methylorsellinic acid (5MOA) by the cytosolic polyketide synthase mpaC. 5MOA is then converted to the phthalide compound 5,7-dihydroxy-4,6-dimethylphthalide (DHMP) by the endoplasmic reticulum-bound cytochrome P450 monooxygenase mpaDE. MpaDE first catalyzes hydroxylation of 5-MOA to 4,6-dihydroxy-2-(hydroxymethyl)-3-methylbenzoic acid (DHMB). MpaDE then acts as a lactone synthase that catalyzes the ring closure to convert DHMB into DHMP. The next step is the prenylation of DHMP by the Golgi apparatus-associated prenyltransferase mpaA to yield farnesyl-DHMP (FDHMP). The ER-bound oxygenase mpaB then mediates the oxidative cleavage the C19-C20 double bond in FDHMP to yield FDHMP-3C via a mycophenolic aldehyde intermediate. The O-methyltransferase mpaG catalyzes the methylation of FDHMP-3C to yield MFDHMP-3C. After the cytosolic methylation of FDHMP-3C, MFDHMP-3C enters into peroxisomes probably via free diffusion due to its low molecular weight. Upon a peroxisomal CoA ligation reaction, catalyzed by a beta-oxidation component enzyme acyl-CoA ligase ACL891, MFDHMP-3C-CoA would then be restricted to peroxisomes for the following beta-oxidation pathway steps. The peroxisomal beta-oxidation machinery than converts MFDHMP-3C-CoA into MPA_CoA, via a beta-oxidation chain-shortening process. Finally mpaH acts as a peroxisomal acyl-CoA hydrolase with high substrate specificity toward MPA-CoA to release the final product MPA. This chain is Cytochrome P450 monooxygenase mpaDE, found in Penicillium brevicompactum.